The sequence spans 567 residues: Potassium-transporting ATPase potassium-binding subunit (567 aa).

11 consecutive transmembrane segments (helical) span residues 5-25 (GWIQ…PLGG), 64-84 (TTYA…LYML), 136-156 (GLTV…IALI), 179-199 (LYVL…LGVP), 254-274 (ISNM…TNVF), 285-305 (WAIF…CYWA), 332-352 (IAMS…AVIA), 359-376 (ALGG…EIII), 421-441 (MLAV…ASVI), 486-506 (ITIG…AMAI), and 529-549 (LFVG…FFPA).

The protein belongs to the KdpA family. The system is composed of three essential subunits: KdpA, KdpB and KdpC.

It localises to the cell inner membrane. Its function is as follows. Part of the high-affinity ATP-driven potassium transport (or Kdp) system, which catalyzes the hydrolysis of ATP coupled with the electrogenic transport of potassium into the cytoplasm. This subunit binds the periplasmic potassium ions and delivers the ions to the membrane domain of KdpB through an intramembrane tunnel. This Brucella anthropi (strain ATCC 49188 / DSM 6882 / CCUG 24695 / JCM 21032 / LMG 3331 / NBRC 15819 / NCTC 12168 / Alc 37) (Ochrobactrum anthropi) protein is Potassium-transporting ATPase potassium-binding subunit.